A 336-amino-acid polypeptide reads, in one-letter code: Glyceraldehyde-3-phosphate dehydrogenase (336 aa).

Residues 12 to 13, Asp-34, Arg-78, and Thr-121 contribute to the NAD(+) site; that span reads RI. D-glyceraldehyde 3-phosphate is bound by residues 151-153, Thr-182, Arg-199, 212-213, and Arg-235; these read SCT and TG. Cys-152 functions as the Nucleophile in the catalytic mechanism. Asn-316 contacts NAD(+).

It belongs to the glyceraldehyde-3-phosphate dehydrogenase family. As to quaternary structure, homotetramer.

It is found in the cytoplasm. The catalysed reaction is D-glyceraldehyde 3-phosphate + phosphate + NAD(+) = (2R)-3-phospho-glyceroyl phosphate + NADH + H(+). Its pathway is carbohydrate degradation; glycolysis; pyruvate from D-glyceraldehyde 3-phosphate: step 1/5. In terms of biological role, also binds human plasminogen. Functionally, catalyzes the oxidative phosphorylation of glyceraldehyde 3-phosphate (G3P) to 1,3-bisphosphoglycerate (BPG) using the cofactor NAD. The first reaction step involves the formation of a hemiacetal intermediate between G3P and a cysteine residue, and this hemiacetal intermediate is then oxidized to a thioester, with concomitant reduction of NAD to NADH. The reduced NADH is then exchanged with the second NAD, and the thioester is attacked by a nucleophilic inorganic phosphate to produce BPG. The sequence is that of Glyceraldehyde-3-phosphate dehydrogenase (gap) from Streptococcus pyogenes.